A 403-amino-acid chain; its full sequence is S-adenosylmethionine synthase (403 aa).

Position 17 (histidine 17) interacts with ATP. Aspartate 19 lines the Mg(2+) pocket. Glutamate 45 serves as a coordination point for K(+). L-methionine-binding residues include glutamate 58 and glutamine 104. The tract at residues 104–114 (QSPDIAQGVDT) is flexible loop. ATP-binding positions include 179–181 (DGK), 250–251 (KF), aspartate 259, 265–266 (RK), alanine 282, and lysine 286. Aspartate 259 lines the L-methionine pocket. Lysine 290 provides a ligand contact to L-methionine.

The protein belongs to the AdoMet synthase family. In terms of assembly, homotetramer; dimer of dimers. It depends on Mg(2+) as a cofactor. The cofactor is K(+).

Its subcellular location is the cytoplasm. The catalysed reaction is L-methionine + ATP + H2O = S-adenosyl-L-methionine + phosphate + diphosphate. The protein operates within amino-acid biosynthesis; S-adenosyl-L-methionine biosynthesis; S-adenosyl-L-methionine from L-methionine: step 1/1. Functionally, catalyzes the formation of S-adenosylmethionine (AdoMet) from methionine and ATP. The overall synthetic reaction is composed of two sequential steps, AdoMet formation and the subsequent tripolyphosphate hydrolysis which occurs prior to release of AdoMet from the enzyme. The polypeptide is S-adenosylmethionine synthase (Mycobacterium tuberculosis (strain ATCC 25177 / H37Ra)).